A 189-amino-acid polypeptide reads, in one-letter code: GMP synthase [glutamine-hydrolyzing] subunit A (189 aa).

A Glutamine amidotransferase type-1 domain is found at 5–189 (KILVVNNYGQ…MNFFEVCDLY (185 aa)). Catalysis depends on C79, which acts as the Nucleophile. Catalysis depends on residues H166 and E168.

In terms of assembly, heterodimer composed of a glutamine amidotransferase subunit (A) and a GMP-binding subunit (B).

It carries out the reaction XMP + L-glutamine + ATP + H2O = GMP + L-glutamate + AMP + diphosphate + 2 H(+). It participates in purine metabolism; GMP biosynthesis; GMP from XMP (L-Gln route): step 1/1. Catalyzes the synthesis of GMP from XMP. This Methanosarcina mazei (strain ATCC BAA-159 / DSM 3647 / Goe1 / Go1 / JCM 11833 / OCM 88) (Methanosarcina frisia) protein is GMP synthase [glutamine-hydrolyzing] subunit A.